The chain runs to 700 residues: MRSRVPLQILLYAAVIRSLKVVSKRGSVDGCTDWSVDYLRYRVLLGEPVRIKCALFYGYIRANYTHAQSAGLSLMWYRSATHTDHEEPITLDGTRTLKEEDALWFRPAQLQDSGHYSCVLRNSSYCMKVSMALTVAENSSGLCYNSKMRRLEKAELSKSKDILCPDIQDYTPAGSEPHVTWYKECRPKQWRSSIIRTADLLSIRDVREDDIGNYTCEIQFGRFLVRRTTELTVTAPLTDKPPKILQPPEHKLSVMELQLGGPVNLTCRAFFGYSGDVSPLIYWMKGEKFIEDLDETRIRESEIKMVREHLGEQEVSVSLTIDSLQEEDLGNYSCYVENGHGRRHAIIQLSRRELMYTVELAGGLGAILLMLIFLVSLYKCYRIELMLFYRNHFGSEDVDGENKDYDAYVSYTKVDPDQWSQETREEEHFALEILPDMLEKHYGYKLFIPDRDLIPTGTYIEDVARCVDQSKRLIIVMTPNYVVRRGWSIFELETRLRNMLVSGEIKVILIECSDLRGIMNYQEVEALKHTIKLLTVIRWPGPGSSKPNSRFWKQLQYEMPFRRPEPKLSHEQVLDASEQGPFGELQTVSALSMVSATSTAMATAHPDLRSGFHNTYNTQLRQKHYYRGYEYDIPSSGTLPPLATMGSQHTYCNIPMSLLNGQRPPGQPAHGQQQSLEEQQVNNALLPLLPRETSISSVIW.

Positions 1-18 (MRSRVPLQILLYAAVIRS) are cleaved as a signal peptide. At 19–357 (LKVVSKRGSV…QLSRRELMYT (339 aa)) the chain is on the extracellular side. Positions 32-134 (TDWSVDYLRY…YCMKVSMALT (103 aa)) constitute an Ig-like C2-type 1 domain. The cysteines at positions 53 and 118 are disulfide-linked. Asn-63, Asn-122, Asn-138, Asn-213, Asn-264, and Asn-331 each carry an N-linked (GlcNAc...) asparagine glycan. Ig-like C2-type domains follow at residues 143–232 (CYNS…TELT) and 242–350 (PKIL…IQLS). Cysteines 164 and 216 form a disulfide. An intrachain disulfide couples Cys-267 to Cys-334. A helical transmembrane segment spans residues 358–378 (VELAGGLGAILLMLIFLVSLY). Residues 379–700 (KCYRIELMLF…RETSISSVIW (322 aa)) lie on the Cytoplasmic side of the membrane. Residues 403 to 559 (KDYDAYVSYT…RFWKQLQYEM (157 aa)) enclose the TIR domain. Residue Glu-491 is part of the active site. The interval 564-700 (PEPKLSHEQV…RETSISSVIW (137 aa)) is required for synaptic vesicle accumulation during synaptogenesis.

This sequence belongs to the interleukin-1 receptor family.

The protein localises to the cell membrane. The protein resides in the cytoplasm. The enzyme catalyses NAD(+) + H2O = ADP-D-ribose + nicotinamide + H(+). Functionally, may regulate secretion and presynaptic differentiation through inhibition of the activity of N-type voltage-gated calcium channel. During presynaptic differentiation may regulate both synaptic vesicle accumulation in axon terminals and subsequent axon terminal remodeling. This Danio rerio (Zebrafish) protein is Interleukin-1 receptor accessory protein-like 1-B (il1rapl1b).